We begin with the raw amino-acid sequence, 280 residues long: Elongation factor Ts (280 aa).

Residues 79–82 (TDFV) are involved in Mg(2+) ion dislocation from EF-Tu.

This sequence belongs to the EF-Ts family.

Its subcellular location is the cytoplasm. In terms of biological role, associates with the EF-Tu.GDP complex and induces the exchange of GDP to GTP. It remains bound to the aminoacyl-tRNA.EF-Tu.GTP complex up to the GTP hydrolysis stage on the ribosome. The sequence is that of Elongation factor Ts from Vibrio vulnificus (strain CMCP6).